Reading from the N-terminus, the 259-residue chain is Global transcriptional regulator CodY (259 aa).

The GAF domain stretch occupies residues 1–155; that stretch reads MTLLEKTRKI…GGTVVGMEIL (155 aa). The segment at residues 203-222 is a DNA-binding region (H-T-H motif); that stretch reads ASKIADRVGITRSVIVNALR.

Belongs to the CodY family.

The protein localises to the cytoplasm. In terms of biological role, DNA-binding global transcriptional regulator which is involved in the adaptive response to starvation and acts by directly or indirectly controlling the expression of numerous genes in response to nutrient availability. During rapid exponential growth, CodY is highly active and represses genes whose products allow adaptation to nutrient depletion. This Listeria welshimeri serovar 6b (strain ATCC 35897 / DSM 20650 / CCUG 15529 / CIP 8149 / NCTC 11857 / SLCC 5334 / V8) protein is Global transcriptional regulator CodY.